An 87-amino-acid chain; its full sequence is Defensin-like protein 81 (87 aa).

Positions Met1–Gly27 are cleaved as a signal peptide. Disulfide bonds link Cys33–Cys69, Cys37–Cys57, Cys43–Cys67, and Cys47–Cys68.

This sequence belongs to the DEFL family.

The protein localises to the secreted. The chain is Defensin-like protein 81 from Arabidopsis thaliana (Mouse-ear cress).